The primary structure comprises 943 residues: TBC1 domain family member 2B (943 aa).

The segment at 1–29 (MPGVEDPCDSQGTPPEEPSTSVAPGEAAK) is disordered. Residues 10-22 (SQGTPPEEPSTSV) are compositionally biased toward polar residues. The region spanning 32 to 129 (SPRLCGYLAK…WLQELQQKRW (98 aa)) is the PH domain. Positions 315–514 (RMESDVLLKL…ARYSNLEAKM (200 aa)) form a coiled coil. In terms of domain architecture, Rab-GAP TBC spans 642–836 (GIPHEHRSRM…RIWDSLLYEG (195 aa)).

The protein localises to the early endosome. Functionally, GTPase-activating protein that plays a role in the early steps of endocytosis. The polypeptide is TBC1 domain family member 2B (tbc1d2b) (Xenopus tropicalis (Western clawed frog)).